The chain runs to 785 residues: SUN domain-containing protein 1 (785 aa).

The tract at residues 1 to 138 (MDFSRLHMYS…TRRPPVLDES (138 aa)) is LMNA-binding. Residues 1–288 (MDFSRLHMYS…VFLLTRCLRN (288 aa)) lie on the Nuclear side of the membrane. 3 positions are modified to phosphoserine: Ser48, Ser100, and Ser138. Lys195 participates in a covalent cross-link: Glycyl lysine isopeptide (Lys-Gly) (interchain with G-Cter in SUMO2). The interval 209–309 (SRVYSRDRNQ…FLLLAGLSLR (101 aa)) is SYNE2-binding. The tract at residues 223-309 (LLQILRRIGA…FLLLAGLSLR (87 aa)) is EMD-binding. A helical membrane pass occupies residues 289–308 (ICKFLVLLIPLFLLLAGLSL). Residues 309–785 (RGQGNFFSFL…RFRVHGEPVK (477 aa)) lie on the Perinuclear space side of the membrane. Phosphoserine occurs at positions 333 and 344. Residues 428–495 (HQEHEVRMSH…KSELSSWRHV (68 aa)) are a coiled coil. The segment at 574–785 (TSEAVVSAVS…RFRVHGEPVK (212 aa)) is sufficient for interaction with SYNE1 and SYNE2. An SUN domain is found at 622–784 (GGSILSTRCS…YRFRVHGEPV (163 aa)).

In terms of assembly, core component of the LINC complex which is composed of inner nuclear membrane SUN domain-containing proteins coupled to outer nuclear membrane KASH domain-containing nesprins. SUN and KASH domain-containing proteins seem to bind each other promiscuously; however, differentially expression of LINC complex constituents is giving rise to specific assemblies. At least SUN1/2-containing core LINC complexes are proposed to be hexameric composed of three protomers of each KASH and SUN domain-containing protein. Interacts with KASH5 (via the last 22 amino acids); this interaction mediates KASH5 telomere localization by forming a SUN1:KASH5 LINC complex. May interact with SYNE3. Interacts with SYNE2 and SYNE1; probably forming respective LINC complexes. Interacts with A-type lamin with a strong preference for unprocessed A-type lamin compared with the mature protein. Interaction with lamins B1 and C is hardly detectable. Interacts with NAT10. Interacts with EMD and TSNAX. Associates with the nuclear pore complex (NPC). Interacts with CCDC79/TERB1; promoting the accumulation of the LINC complex complexes at the telomere-nuclear envelope attachment sites. Interacts (via KASH domain) with TMEM258. In terms of processing, the disulfide bond with KASH domain-containing nesprins is required for stability of the respective LINC complexes under tensile forces.

The protein resides in the nucleus inner membrane. As a component of the LINC (LInker of Nucleoskeleton and Cytoskeleton) complex involved in the connection between the nuclear lamina and the cytoskeleton. The nucleocytoplasmic interactions established by the LINC complex play an important role in the transmission of mechanical forces across the nuclear envelope and in nuclear movement and positioning. Required for interkinetic nuclear migration (INM) and essential for nucleokinesis and centrosome-nucleus coupling during radial neuronal migration in the cerebral cortex and during glial migration. Involved in telomere attachment to nuclear envelope in the prophase of meiosis implicating a SUN1/2:KASH5 LINC complex in which SUN1 and SUN2 seem to act at least partial redundantly. Required for gametogenesis and involved in selective gene expression of coding and non-coding RNAs needed for gametogenesis. Helps to define the distribution of nuclear pore complexes (NPCs). Required for efficient localization of SYNE4 in the nuclear envelope. May be involved in nuclear remodeling during sperm head formation in spermatogenesis. May play a role in DNA repair by suppressing non-homologous end joining repair to facilitate the repair of DNA cross-links. The polypeptide is SUN domain-containing protein 1 (Homo sapiens (Human)).